The following is a 245-amino-acid chain: DNA repair protein RecO (245 aa).

The protein belongs to the RecO family.

Involved in DNA repair and RecF pathway recombination. This is DNA repair protein RecO from Anaplasma phagocytophilum (strain HZ).